The sequence spans 101 residues: Small ribosomal subunit protein uS14 (101 aa).

This sequence belongs to the universal ribosomal protein uS14 family. In terms of assembly, part of the 30S ribosomal subunit. Contacts proteins S3 and S10.

In terms of biological role, binds 16S rRNA, required for the assembly of 30S particles and may also be responsible for determining the conformation of the 16S rRNA at the A site. In Methylorubrum extorquens (strain PA1) (Methylobacterium extorquens), this protein is Small ribosomal subunit protein uS14.